A 359-amino-acid polypeptide reads, in one-letter code: Heme A synthase (359 aa).

The next 5 membrane-spanning stretches (helical) occupy residues 8–28 (IMSI…VVGG), 94–114 (LLGR…CYLK), 124–144 (LLLI…MVKS), 159–179 (GHLL…LIII), and 215–235 (IIIF…GLDA). Position 274 (His274) interacts with heme. A run of 3 helical transmembrane segments spans residues 276-296 (WFGI…IILN), 303-323 (MGMV…ITLL), and 328-348 (ILAA…FLFI). His334 serves as a coordination point for heme.

Belongs to the COX15/CtaA family. Type 2 subfamily. As to quaternary structure, interacts with CtaB. Requires heme b as cofactor.

The protein localises to the cell membrane. The enzyme catalyses Fe(II)-heme o + 2 A + H2O = Fe(II)-heme a + 2 AH2. It functions in the pathway porphyrin-containing compound metabolism; heme A biosynthesis; heme A from heme O: step 1/1. Functionally, catalyzes the conversion of heme O to heme A by two successive hydroxylations of the methyl group at C8. The first hydroxylation forms heme I, the second hydroxylation results in an unstable dihydroxymethyl group, which spontaneously dehydrates, resulting in the formyl group of heme A. This Orientia tsutsugamushi (strain Boryong) (Rickettsia tsutsugamushi) protein is Heme A synthase.